The following is an 811-amino-acid chain: Ent-13-epi-manoyl oxide synthase KSL2, chloroplastic (811 aa).

Residues Met-1–Cys-49 constitute a chloroplast transit peptide. Mg(2+) contacts are provided by Asp-550, Asp-554, Asn-694, and Glu-702. A DDXXD motif motif is present at residues Asp-550–Asp-554.

This sequence belongs to the terpene synthase family. Mg(2+) is required as a cofactor.

The protein localises to the plastid. The protein resides in the chloroplast. The enzyme catalyses ent-8alpha-hydroxylabd-13-en-15-yl diphosphate = ent-13-epi-manoyl oxide + diphosphate. The protein operates within secondary metabolite biosynthesis; terpenoid biosynthesis. Its function is as follows. Involved in diterpenoid biosynthesis. Catalyzes the conversion of ent-8alpha-hydroxylabd-13-en-15-yl diphosphate to ent-13-epi-manoyl oxide. This Salvia miltiorrhiza (Chinese sage) protein is Ent-13-epi-manoyl oxide synthase KSL2, chloroplastic.